The chain runs to 656 residues: Anion exchange transporter (656 aa).

Residues 1 to 75 (MTGAKRKKKS…LAFAVLSSVH (75 aa)) lie on the Cytoplasmic side of the membrane. Residues 76–96 (PVFGLYGSLFPAIIYAIFGMG) form a helical membrane-spanning segment. Residues 97–144 (HHVATGTFALTSLISANAVERIVPQNMQNLTTQSNTSVLGLSDFEMQR) lie on the Extracellular side of the membrane. The chain crosses the membrane as a helical span at residues 145 to 165 (IHVAAAVSFLGGVIQVAMFVL). Residue glutamine 166 is a topological domain, cytoplasmic. The helical transmembrane segment at 167 to 187 (LGSATFVVTEPVISAMTTGAA) threads the bilayer. Topologically, residues 188–202 (THVVTSQVKYLLGMK) are extracellular. Residues 203–223 (MPYISGPLGFFYIYAYVFENI) traverse the membrane as a helical segment. The Cytoplasmic portion of the chain corresponds to 224–227 (KSVR). Residues 228 to 248 (LEALLLSLLSIVVLVLVKELN) form a helical membrane-spanning segment. Residues 249–254 (EQFKRK) lie on the Extracellular side of the membrane. The helical transmembrane segment at 255-275 (IKVVLPVDLVLIIAASFACYC) threads the bilayer. At 276 to 306 (TNMENTYGLEVVGHIPQGIPSPRAPPMNILS) the chain is on the cytoplasmic side. A helical transmembrane segment spans residues 307 to 327 (AVITEAFGVALVGYVASLALA). The Extracellular segment spans residues 328–343 (QGSAKKFKYSIDDNQE). A helical transmembrane segment spans residues 344 to 364 (FLAHGLSNIVSSFFFCIPSAA). Residues 365–383 (AMGRTAGLYSTGAKTQVAC) are Cytoplasmic-facing. 2 consecutive transmembrane segments (helical) span residues 384–404 (LISC…LYWL) and 405–425 (PMCV…IQFR). Residues 426–448 (DLKKYWNVDKIDWGIWVSTYVFT) are Extracellular-facing. Residues 449–469 (ICFAANVGLLFGVVCTIAIVI) form a helical membrane-spanning segment. The Cytoplasmic segment spans residues 470-656 (GRFPRAMTVS…LSKLSDHSEV (187 aa)). Residues 492 to 641 (TEMDSETLQQ…ESVSAAISHI (150 aa)) form the STAS domain. The interval 641-656 (IHSNKNLSKLSDHSEV) is membrane targeting.

This sequence belongs to the SLC26A/SulP transporter (TC 2.A.53) family. Expressed in the thyroid gland (at protein level). Expressed in tonsillar high endothelial venule endothelial cells (HEVEC), placenta and in testis, expressed in a subgroup of basal cells in the epididymal ducts.

It is found in the basolateral cell membrane. It localises to the recycling endosome membrane. The protein localises to the apical cell membrane. Its subcellular location is the lateral cell membrane. The catalysed reaction is chloride(in) = chloride(out). The enzyme catalyses iodide(out) = iodide(in). It carries out the reaction bromide(in) = bromide(out). It catalyses the reaction oxalate(in) = oxalate(out). The catalysed reaction is nitrate(in) = nitrate(out). The enzyme catalyses sulfate(in) = sulfate(out). It carries out the reaction thiocyanate(in) = thiocyanate(out). It catalyses the reaction D-gluconate(in) = D-gluconate(out). The catalysed reaction is hydrogencarbonate(in) = hydrogencarbonate(out). The enzyme catalyses hydrogencarbonate(in) + chloride(out) = hydrogencarbonate(out) + chloride(in). Is active at both alkaline and acidic pH. Activity is inhibited by 4,4'-Di-isothiocyanatostilbene-2,2'-disulfonic acid (DIDS - an inhibitor of several anion channels and transporters). Functionally, acts as an anion channel mediating the transport of chloride, sulfate and oxalate ions. Mediates the transport of bromide, iodide, nitrate, gluconate, thiocyanate and bicarbonate ions. Its permeability towards bicarbonate is weak and increases when pH is above 7. Mediates thiocyanate transport in retinal pigment epithelium cells. Mediates iodide transport in the thyroid gland, playing an important role in the synthesis of thyroid hormones and the maintenance of thyroid function. Although it is an anion channel, according to PubMed:12736153 and PubMed:32119864 it has been shown to exhibit chloride-bicarbonate exchanger activity. The polypeptide is Anion exchange transporter (Homo sapiens (Human)).